Here is a 554-residue protein sequence, read N- to C-terminus: Solute carrier family 22 member 2 (554 aa).

Over 1-21 the chain is Cytoplasmic; the sequence is MPTVDDILEQVGHFHFFQKQT. The helical transmembrane segment at 22–42 threads the bilayer; it reads FFLLALISAAFTPIYVGIVFL. The Extracellular segment spans residues 43-149; it reads GFTPDHRCRS…LVCARSWMLD (107 aa). An N-linked (GlcNAc...) asparagine glycan is attached at Asn-71. The helical transmembrane segment at 150–170 threads the bilayer; it reads LFQSAVNIGFFIGSVGIGYLA. Residues 171 to 176 are Cytoplasmic-facing; the sequence is DRFGRK. A helical transmembrane segment spans residues 177-197; the sequence is LCLLVTILINAAAGVLMAVSP. The N-linked (GlcNAc...) asparagine glycan is linked to Asn-198. At 198-209 the chain is on the extracellular side; it reads NYTWMLIFRLIQ. The chain crosses the membrane as a helical span at residues 210 to 230; it reads GLVSKAGWLIGYILITEFVGL. The Cytoplasmic segment spans residues 231-237; it reads NYRRTVG. A helical membrane pass occupies residues 238-258; it reads ILYQVAFTVGLLVLAGVAYAL. At 259 to 262 the chain is on the extracellular side; sequence PRWR. The chain crosses the membrane as a helical span at residues 263–283; the sequence is WLQLTVTLPYFCFLLYYWCIP. The short motif at 283 to 287 is the Proline-rich sequence element; it reads PESPR. Residues 284 to 348 lie on the Cytoplasmic side of the membrane; that stretch reads ESPRWLISQN…RTPQIRKHTC (65 aa). Residues 349 to 369 form a helical membrane-spanning segment; that stretch reads ILMYNWFTSSVLYQGLIMHLG. The Extracellular portion of the chain corresponds to 370 to 374; that stretch reads LAGGD. Residues 375–395 form a helical membrane-spanning segment; that stretch reads IYLDFFYSALVEFPAAFLIIA. Residues 396–403 are Cytoplasmic-facing; that stretch reads TIDRVGRR. A helical membrane pass occupies residues 404 to 424; it reads YPWAVSNMVAGAACLASVFVP. Residues 425-427 are Extracellular-facing; that stretch reads DDL. The helical transmembrane segment at 428–450 threads the bilayer; sequence QGLRITVACLGRMGITMAYEMVC. Over 451–463 the chain is Cytoplasmic; it reads LVNAELYPTFIRN. The helical transmembrane segment at 464–484 threads the bilayer; that stretch reads LGVLVCSSLCDVGGIVTPFLV. Residues 485–493 lie on the Extracellular side of the membrane; that stretch reads YRLTAIWLQ. The chain crosses the membrane as a helical span at residues 494 to 514; that stretch reads LPLVVFAVVGLVAGGLVLMLP. Residues 515 to 554 lie on the Cytoplasmic side of the membrane; it reads ETKGRTLPETIEEAENLQRPRKNREKVIYVHVRKADGPLT.

The protein belongs to the major facilitator (TC 2.A.1) superfamily. Organic cation transporter (TC 2.A.1.19) family. Post-translationally, tyrosine phosphorylated. Expressed in kidney.

The protein resides in the basolateral cell membrane. It is found in the basal cell membrane. It catalyses the reaction (R)-noradrenaline(out) = (R)-noradrenaline(in). The enzyme catalyses (R)-adrenaline(out) = (R)-adrenaline(in). The catalysed reaction is serotonin(out) = serotonin(in). It carries out the reaction dopamine(out) = dopamine(in). It catalyses the reaction histamine(out) = histamine(in). The enzyme catalyses thiamine(in) = thiamine(out). The catalysed reaction is creatinine(in) = creatinine(out). It carries out the reaction 1-methylnicotinamide(out) = 1-methylnicotinamide(in). It catalyses the reaction guanidine(out) = guanidine(in). The enzyme catalyses choline(out) = choline(in). The catalysed reaction is agmatine(out) = agmatine(in). It carries out the reaction putrescine(out) = putrescine(in). It catalyses the reaction spermidine(in) = spermidine(out). The enzyme catalyses tyramine(in) = tyramine(out). The catalysed reaction is L-histidyl-L-proline diketopiperazine(in) = L-histidyl-L-proline diketopiperazine(out). It carries out the reaction (R)-salsolinol(in) = (R)-salsolinol(out). It catalyses the reaction N-methyl-(R)-salsolinol(in) = N-methyl-(R)-salsolinol(out). The enzyme catalyses acetylcholine(in) = acetylcholine(out). The catalysed reaction is prostaglandin F2alpha(out) = prostaglandin F2alpha(in). It carries out the reaction prostaglandin E2(out) = prostaglandin E2(in). Tyrosine phosphorylation of the transporter leads to activation of the transport activity. Inhibited by cGMP, most likely through a cGMP-binding protein that interacts with OCT2. In terms of biological role, electrogenic voltage-dependent transporter that mediates the transport of a variety of organic cations such as endogenous bioactive amines, cationic drugs and xenobiotics. Functions as a Na(+)-independent, bidirectional uniporter. Cation cellular uptake or release is driven by the electrochemical potential, i.e. membrane potential and concentration gradient. However, may also engage electroneutral cation exchange when saturating concentrations of cation substrates are reached. Predominantly expressed at the basolateral membrane of hepatocytes and proximal tubules and involved in the uptake and disposition of cationic compounds by hepatic and renal clearance from the blood flow. Implicated in monoamine neurotransmitters uptake such as histamine, dopamine, adrenaline/epinephrine, noradrenaline/norepinephrine, serotonin and tyramine, thereby supporting a physiological role in the central nervous system by regulating interstitial concentrations of neurotransmitters. Also capable of transporting dopaminergic neuromodulators cyclo(his-pro), salsolinol and N-methyl-salsolinol, thereby involved in the maintenance of dopaminergic cell integrity in the central nervous system. Mediates the bidirectional transport of acetylcholine (ACh) at the apical membrane of ciliated cell in airway epithelium, thereby playing a role in luminal release of ACh from bronchial epithelium. Also transports guanidine and endogenous monoamines such as vitamin B1/thiamine, creatinine and N-1-methylnicotinamide (NMN). Mediates the uptake and efflux of quaternary ammonium compound choline. Mediates the bidirectional transport of polyamine agmatine and the uptake of polyamines putrescine and spermidine. Able to transport non-amine endogenous compounds such as prostaglandin E2 (PGE2) and prostaglandin F2-alpha (PGF2-alpha). Also involved in the uptake of xenobiotic 4-(4-(dimethylamino)styryl)-N-methylpyridinium (ASP). May contribute to regulate the transport of organic compounds in testis across the blood-testis-barrier. This chain is Solute carrier family 22 member 2 (SLC22A2), found in Oryctolagus cuniculus (Rabbit).